The following is a 493-amino-acid chain: Serine/threonine-protein kinase 3 (493 aa).

One can recognise a Protein kinase domain in the interval 26–277; that stretch reads FDVLEKLGEG…ATQLLQHPFI (252 aa). ATP is bound by residues 32 to 40 and K55; that span reads LGEGSYGSV. Residue D145 is the Proton acceptor of the active site. T179 is subject to Phosphothreonine; by autocatalysis. A coiled-coil region spans residues 286-327; that stretch reads LRDLITEAMDIKAKRHEELQRELEEEDENSEEDELDSHTMVK. 2 disordered regions span residues 303–336 and 369–414; these read ELQRELEEEDENSEEDELDSHTMVKTNSESAGTM and DDEE…NCNQ. The span at 308 to 320 shows a compositional bias: acidic residues; the sequence is LEEEDENSEEDEL. The segment covering 325–336 has biased composition (polar residues); the sequence is MVKTNSESAGTM. Positions 369–378 are enriched in acidic residues; that stretch reads DDEEEEEEED. Positions 398 to 410 are enriched in basic and acidic residues; the sequence is YFDKQDSKNKPHD. The SARAH domain occupies 439-486; sequence FDFLKNLSFEELQMRLKALDPMMEREIEDLRQRYNAKRQPILDAMDAK. Residues 444 to 477 are a coiled coil; that stretch reads NLSFEELQMRLKALDPMMEREIEDLRQRYNAKRQ.

This sequence belongs to the protein kinase superfamily. STE Ser/Thr protein kinase family. STE20 subfamily. Homodimer; mediated via the coiled-coil region. Mg(2+) serves as cofactor.

The protein localises to the cytoplasm. Its subcellular location is the nucleus. It carries out the reaction L-seryl-[protein] + ATP = O-phospho-L-seryl-[protein] + ADP + H(+). The catalysed reaction is L-threonyl-[protein] + ATP = O-phospho-L-threonyl-[protein] + ADP + H(+). Its activity is regulated as follows. Inhibited by the C-terminal non-catalytic region. Activated by caspase-cleavage. Full activation also requires homodimerization and autophosphorylation of Thr-179. In terms of biological role, stress-activated, pro-apoptotic kinase which, following caspase-cleavage, enters the nucleus and induces chromatin condensation followed by internucleosomal DNA fragmentation. Key component of the Hippo signaling pathway which plays a pivotal role in organ size control and tumor suppression by restricting proliferation and promoting apoptosis. The core of this pathway is composed of a kinase cascade wherein stk3/mst2 and stk4/mst1, in complex with its regulatory protein sav1, phosphorylates and activates lats1/2 in complex with its regulatory protein mob1, which in turn phosphorylates and inactivates yap1 oncoprotein and wwtr1/taz. Phosphorylation of yap1 by lats2 inhibits its translocation into the nucleus to regulate cellular genes important for cell proliferation, cell death, and cell migration. This is Serine/threonine-protein kinase 3 (stk3) from Xenopus laevis (African clawed frog).